The primary structure comprises 283 residues: NAD kinase (283 aa).

Catalysis depends on Asp-68, which acts as the Proton acceptor. NAD(+) contacts are provided by residues 68-69 (DG), 142-143 (ND), Arg-153, Asp-172, 183-188 (TAYSLS), and Gln-242.

This sequence belongs to the NAD kinase family. A divalent metal cation serves as cofactor.

Its subcellular location is the cytoplasm. The enzyme catalyses NAD(+) + ATP = ADP + NADP(+) + H(+). Its function is as follows. Involved in the regulation of the intracellular balance of NAD and NADP, and is a key enzyme in the biosynthesis of NADP. Catalyzes specifically the phosphorylation on 2'-hydroxyl of the adenosine moiety of NAD to yield NADP. The protein is NAD kinase of Caldanaerobacter subterraneus subsp. tengcongensis (strain DSM 15242 / JCM 11007 / NBRC 100824 / MB4) (Thermoanaerobacter tengcongensis).